The primary structure comprises 165 residues: Anaerobic nitrite reductase GLB1 (165 aa).

One can recognise a Globin domain in the interval 12 to 162 (VFGEEQEALV…LVAAIKREMK (151 aa)). The Homodimerization motif lies at 45–49 (EIAPS). Heme b is bound by residues S55, K69, H73, R103, T107, and H108. The Homodimerization signature appears at 115–127 (DGHFEVTGFALLE).

This sequence belongs to the plant globin family. Homodimer. Requires heme b as cofactor. In vegetative but not in embryonic organs.

It is found in the cytoplasm. The protein localises to the nucleus. It carries out the reaction Fe(III)-heme b-[protein] + nitric oxide + H2O = Fe(II)-heme b-[protein] + nitrite + 2 H(+). Phytoglobin that reduces nitrite to nitric oxide (NO) under anoxic conditions (e.g. during flooding or in waterlogged soil). May not function as an oxygen storage or transport protein. Has an unusually high affinity for O(2) through an hexacoordinate heme iron because of a very low dissociation constant. The sequence is that of Anaerobic nitrite reductase GLB1 (HB) from Zea mays subsp. parviglumis (Balsas teosinte).